The sequence spans 322 residues: DNA repair and recombination protein RadA (322 aa).

105-112 (GMYGSGKT) provides a ligand contact to ATP.

This sequence belongs to the eukaryotic RecA-like protein family.

Its function is as follows. Involved in DNA repair and in homologous recombination. Binds and assemble on single-stranded DNA to form a nucleoprotein filament. Hydrolyzes ATP in a ssDNA-dependent manner and promotes DNA strand exchange between homologous DNA molecules. The protein is DNA repair and recombination protein RadA of Methanococcus maripaludis (strain C6 / ATCC BAA-1332).